The chain runs to 187 residues: Ribosome maturation factor RimM (187 aa).

Over residues 1–17 (MTSTPSPSTADPNSTND) the composition is skewed to polar residues. Positions 1–21 (MTSTPSPSTADPNSTNDWLPV) are disordered. Residues 111 to 184 (EGEFHLLDLV…WLLLTPPPGL (74 aa)) enclose the PRC barrel domain.

Belongs to the RimM family. Binds ribosomal protein uS19.

Its subcellular location is the cytoplasm. In terms of biological role, an accessory protein needed during the final step in the assembly of 30S ribosomal subunit, possibly for assembly of the head region. Essential for efficient processing of 16S rRNA. May be needed both before and after RbfA during the maturation of 16S rRNA. It has affinity for free ribosomal 30S subunits but not for 70S ribosomes. The chain is Ribosome maturation factor RimM from Synechococcus sp. (strain CC9311).